The primary structure comprises 515 residues: NAD(P)H-quinone oxidoreductase subunit 2 (515 aa).

The next 14 membrane-spanning stretches (helical) occupy residues 14–34 (TILP…ADLI), 42–62 (WTPY…IPLW), 79–99 (LSLF…LMSI), 109–128 (LGEF…FIAG), 132–151 (LVFI…LLTG), 167–187 (LLIG…LYGL), 206–226 (LGLV…ISAV), 240–260 (PTPV…ALAI), 274–294 (WQLI…VVAL), 302–322 (MLAY…VVGT), 330–350 (LFYL…VILF), 374–394 (LGLS…GFFG), 396–416 (IYLF…LGLL), and 462–482 (VGLV…NPLF).

Belongs to the complex I subunit 2 family. NDH-1 can be composed of about 15 different subunits; different subcomplexes with different compositions have been identified which probably have different functions.

Its subcellular location is the cellular thylakoid membrane. It catalyses the reaction a plastoquinone + NADH + (n+1) H(+)(in) = a plastoquinol + NAD(+) + n H(+)(out). The enzyme catalyses a plastoquinone + NADPH + (n+1) H(+)(in) = a plastoquinol + NADP(+) + n H(+)(out). Its function is as follows. NDH-1 shuttles electrons from an unknown electron donor, via FMN and iron-sulfur (Fe-S) centers, to quinones in the respiratory and/or the photosynthetic chain. The immediate electron acceptor for the enzyme in this species is believed to be plastoquinone. Couples the redox reaction to proton translocation, and thus conserves the redox energy in a proton gradient. Cyanobacterial NDH-1 also plays a role in inorganic carbon-concentration. This chain is NAD(P)H-quinone oxidoreductase subunit 2, found in Thermosynechococcus vestitus (strain NIES-2133 / IAM M-273 / BP-1).